The primary structure comprises 660 residues: Phosphatidylinositol-3-phosphate phosphatase MTMR7 (660 aa).

In terms of domain architecture, Myotubularin phosphatase spans 126-504 (GWVLIDLSEE…FMYKFWSGMY (379 aa)). Residues Asn250, Asn275, and Ile276 each coordinate a 1,2-diacyl-sn-glycero-3-phospho-(1D-myo-inositol-3-phosphate). Catalysis depends on Cys338, which acts as the Phosphocysteine intermediate. A 1,2-diacyl-sn-glycero-3-phospho-(1D-myo-inositol-3-phosphate) is bound by residues Ser339, Asp340, Gly341, Trp342, Asp343, Arg344, and Arg384. A coiled-coil region spans residues 521–551 (LMAVKEETQQLEEELEALEERLEKIQKVQLN). The tract at residues 554–660 (KVKSKQSEPS…DSDEAVFLTA (107 aa)) is disordered. A compositionally biased stretch (polar residues) spans 566–596 (SGFSTSDNSIANTPQDYSGNMKSFPSRSPSQ). Thr578 is subject to Phosphothreonine. Positions 641-653 (APSEDSGKDRDSD) are enriched in basic and acidic residues.

Belongs to the protein-tyrosine phosphatase family. Non-receptor class myotubularin subfamily. As to quaternary structure, heterodimer (via C-terminus) with MTMR9 (via coiled coil domain); the interaction enhances MTMR7 catalytic activity. Does not homodimerize. Interacts with RAB1B (in GDP-bound form). As to expression, expressed specifically in brain.

The protein localises to the cytoplasm. It localises to the endomembrane system. It catalyses the reaction a 1,2-diacyl-sn-glycero-3-phospho-(1D-myo-inositol-3-phosphate) + H2O = a 1,2-diacyl-sn-glycero-3-phospho-(1D-myo-inositol) + phosphate. The catalysed reaction is 1D-myo-inositol 1,3-bisphosphate + H2O = 1D-myo-inositol 1-phosphate + phosphate. With respect to regulation, interaction with MTMR9 increases phosphatase activity. Lipid phosphatase that specifically dephosphorylates the D-3 position of phosphatidylinositol 3-phosphate (PtdIns(3)P) and inositol 1,3-bisphosphate (Ins(1,3)P2). The chain is Phosphatidylinositol-3-phosphate phosphatase MTMR7 from Homo sapiens (Human).